The chain runs to 338 residues: Sporulation protein YdcC (338 aa).

A helical transmembrane segment spans residues 8-25 (FVLLLTGLLAVLILSACG).

It localises to the cell membrane. Required for efficient sporulation. In Bacillus subtilis (strain 168), this protein is Sporulation protein YdcC (ydcC).